Here is a 348-residue protein sequence, read N- to C-terminus: Ferredoxin--NADP reductase (348 aa).

FAD-binding residues include T25, E44, Q52, Y57, V97, F132, D298, and S339.

It belongs to the ferredoxin--NADP reductase type 2 family. In terms of assembly, homodimer. It depends on FAD as a cofactor.

The catalysed reaction is 2 reduced [2Fe-2S]-[ferredoxin] + NADP(+) + H(+) = 2 oxidized [2Fe-2S]-[ferredoxin] + NADPH. This Chlorobium phaeobacteroides (strain BS1) protein is Ferredoxin--NADP reductase.